A 129-amino-acid polypeptide reads, in one-letter code: Small ribosomal subunit protein uS11c (129 aa).

The protein belongs to the universal ribosomal protein uS11 family. In terms of assembly, part of the 30S ribosomal subunit.

The protein resides in the plastid. It localises to the chloroplast. In Pleurastrum terricola (Filamentous green alga), this protein is Small ribosomal subunit protein uS11c.